The sequence spans 136 residues: HetP-like commitment protein Alr2902 (136 aa).

Over residues 94 to 109 the composition is skewed to polar residues; that stretch reads KASTQDLNQSNNSDYL. The tract at residues 94 to 120 is disordered; that stretch reads KASTQDLNQSNNSDYLTTPEPDKRGNI.

This sequence belongs to the HetP family. In bacterial two-hybrid assays interacts robustly with HetR and Alr3234 and weakly with itself, HetP and Asl1930.

Its function is as follows. Delays heterocyst differentiation and commitment when nitrogen is limiting. Interplay between the 4 HetP paralogs controls the timing of commitment to heterocyst formation and its duration. Epistatic analysis show that the 3 paralogs act upstream of hetP to delay commitment (asl1930, alr3234) or inhibit development (alr2902). Asl1930 and Alr3234 must also attenuate the activity of Alr2902. When only this homolog is present no heterocysts are formed, showing it inhibits development. Ectopic expression partially complements a hetP deletion. This is HetP-like commitment protein Alr2902 from Nostoc sp. (strain PCC 7120 / SAG 25.82 / UTEX 2576).